Consider the following 226-residue polypeptide: Putative 5'-nucleotidase alr3139 (226 aa).

Residues D8, D9, S38, and N89 each contribute to the a divalent metal cation site.

This sequence belongs to the SurE nucleotidase family. It depends on a divalent metal cation as a cofactor.

It is found in the cytoplasm. The catalysed reaction is a ribonucleoside 5'-phosphate + H2O = a ribonucleoside + phosphate. Its function is as follows. Nucleotidase that shows phosphatase activity on nucleoside 5'-monophosphates. In Nostoc sp. (strain PCC 7120 / SAG 25.82 / UTEX 2576), this protein is Putative 5'-nucleotidase alr3139.